The chain runs to 581 residues: 2-succinyl-5-enolpyruvyl-6-hydroxy-3-cyclohexene-1-carboxylate synthase (581 aa).

It belongs to the TPP enzyme family. MenD subfamily. In terms of assembly, homodimer. It depends on Mg(2+) as a cofactor. Requires Mn(2+) as cofactor. Thiamine diphosphate serves as cofactor.

The catalysed reaction is isochorismate + 2-oxoglutarate + H(+) = 5-enolpyruvoyl-6-hydroxy-2-succinyl-cyclohex-3-ene-1-carboxylate + CO2. Its pathway is quinol/quinone metabolism; 1,4-dihydroxy-2-naphthoate biosynthesis; 1,4-dihydroxy-2-naphthoate from chorismate: step 2/7. It functions in the pathway quinol/quinone metabolism; menaquinone biosynthesis. Its function is as follows. Catalyzes the thiamine diphosphate-dependent decarboxylation of 2-oxoglutarate and the subsequent addition of the resulting succinic semialdehyde-thiamine pyrophosphate anion to isochorismate to yield 2-succinyl-5-enolpyruvyl-6-hydroxy-3-cyclohexene-1-carboxylate (SEPHCHC). In Psychromonas ingrahamii (strain DSM 17664 / CCUG 51855 / 37), this protein is 2-succinyl-5-enolpyruvyl-6-hydroxy-3-cyclohexene-1-carboxylate synthase.